We begin with the raw amino-acid sequence, 233 residues long: Orotidine 5'-phosphate decarboxylase (233 aa).

Residues Asp-11, Lys-34, 61-70 (DLKLHDIPNT), Thr-117, Arg-179, Gln-188, Gly-208, and Arg-209 contribute to the substrate site. Lys-63 functions as the Proton donor in the catalytic mechanism.

Belongs to the OMP decarboxylase family. Type 1 subfamily. In terms of assembly, homodimer.

The enzyme catalyses orotidine 5'-phosphate + H(+) = UMP + CO2. Its pathway is pyrimidine metabolism; UMP biosynthesis via de novo pathway; UMP from orotate: step 2/2. Catalyzes the decarboxylation of orotidine 5'-monophosphate (OMP) to uridine 5'-monophosphate (UMP). The chain is Orotidine 5'-phosphate decarboxylase from Streptococcus pneumoniae (strain Hungary19A-6).